Reading from the N-terminus, the 177-residue chain is MSRVAKAPVSIPAGVEVTLNEQTLTVKGAKGSLTRVINNAVNVVIEDGVIKFLPVEGAVGAWAQAGTTRALVNNMVVGVSQGFERKLKLVGVGYRAKLVGSDIDLTLGFSHPLVHKLPAGVTAECPSQTDIVLRGVDKQLIGQVAAEIRGYRPPEPYKGKGVRYDDEEVRRKEAKKK.

The span at 152 to 171 shows a compositional bias: basic and acidic residues; that stretch reads RPPEPYKGKGVRYDDEEVRR. Positions 152-177 are disordered; that stretch reads RPPEPYKGKGVRYDDEEVRRKEAKKK.

Belongs to the universal ribosomal protein uL6 family. Part of the 50S ribosomal subunit.

Its function is as follows. This protein binds to the 23S rRNA, and is important in its secondary structure. It is located near the subunit interface in the base of the L7/L12 stalk, and near the tRNA binding site of the peptidyltransferase center. This Shewanella sp. (strain ANA-3) protein is Large ribosomal subunit protein uL6.